The following is a 70-amino-acid chain: uncharacterized protein (70 aa).

This is an uncharacterized protein from Escherichia coli (strain K12).